A 258-amino-acid chain; its full sequence is Type II restriction enzyme HincII (258 aa).

It catalyses the reaction Endonucleolytic cleavage of DNA to give specific double-stranded fragments with terminal 5'-phosphates.. Its function is as follows. A P subtype restriction enzyme that recognizes the double-stranded sequence 5'-GTYRAC-3' and cleaves after Y-3. This chain is Type II restriction enzyme HincII (hincIIR), found in Haemophilus influenzae.